The primary structure comprises 658 residues: UvrABC system protein C (658 aa).

The GIY-YIG domain occupies Pro62–Val140. Residues Gly250–Ile285 enclose the UVR domain.

The protein belongs to the UvrC family. As to quaternary structure, interacts with UvrB in an incision complex.

The protein resides in the cytoplasm. Its function is as follows. The UvrABC repair system catalyzes the recognition and processing of DNA lesions. UvrC both incises the 5' and 3' sides of the lesion. The N-terminal half is responsible for the 3' incision and the C-terminal half is responsible for the 5' incision. The polypeptide is UvrABC system protein C (Novosphingobium aromaticivorans (strain ATCC 700278 / DSM 12444 / CCUG 56034 / CIP 105152 / NBRC 16084 / F199)).